The primary structure comprises 786 residues: DNA double-strand break repair Rad50 ATPase (786 aa).

ATP contacts are provided by residues lysine 13, 33 to 39 (NGSGKTT), and glutamine 138. 3 coiled-coil regions span residues 194–249 (LKAE…LKSI), 337–455 (EKAK…RALE), and 551–650 (ALER…VKAL). Positions 366–459 (EIAELQNKIN…KIRALEKYKG (94 aa)) constitute a Zinc-hook domain. Residues cysteine 411 and cysteine 414 each coordinate Zn(2+).

The protein belongs to the SMC family. RAD50 subfamily. Homodimer. Forms a heterotetramer composed of two Mre11 subunits and two Rad50 subunits. The cofactor is Zn(2+).

In terms of biological role, part of the Rad50/Mre11 complex, which is involved in the early steps of DNA double-strand break (DSB) repair. The complex may facilitate opening of the processed DNA ends to aid in the recruitment of HerA and NurA. Rad50 controls the balance between DNA end bridging and DNA resection via ATP-dependent structural rearrangements of the Rad50/Mre11 complex. The chain is DNA double-strand break repair Rad50 ATPase from Nanoarchaeum equitans (strain Kin4-M).